Here is a 69-residue protein sequence, read N- to C-terminus: Arabinogalactan protein 24 (69 aa).

Positions 1–25 (MMMMTKMFVQIAVVCLLATMAVVSA) are cleaved as a signal peptide. Residues Pro-34, Pro-36, Pro-38, and Pro-40 each carry the 4-hydroxyproline modification. O-linked (Ara...) hydroxyproline glycans are attached at residues Pro-34, Pro-36, Pro-38, and Pro-40. Residue Ser-42 is the site of GPI-anchor amidated serine attachment. The propeptide at 43–69 (SSTVVSATNMFTVLAIAAVALVVGSNH) is removed in mature form.

This sequence belongs to the AG-peptide AGP family. Post-translationally, contains 4-hydroxyproline; hydroxylated on Pro-34, Pro-36, Pro-38 and Pro-40. O-glycosylated on hydroxyprolines; noncontiguous hydroxylproline residues are glycosylated with arabinogalactan.

The protein localises to the cell membrane. Proteoglycan that seems to be implicated in diverse developmental roles such as differentiation, cell-cell recognition, embryogenesis and programmed cell death. This chain is Arabinogalactan protein 24, found in Arabidopsis thaliana (Mouse-ear cress).